We begin with the raw amino-acid sequence, 283 residues long: Pantothenate synthetase (283 aa).

30–37 is an ATP binding site; sequence MGALHRGH. The active-site Proton donor is H37. Residue Q61 coordinates (R)-pantoate. Residue Q61 coordinates beta-alanine. Position 147–150 (147–150) interacts with ATP; sequence GQKD. Position 153 (Q153) interacts with (R)-pantoate. ATP is bound by residues I176 and 184–187; that span reads MSSR.

This sequence belongs to the pantothenate synthetase family. In terms of assembly, homodimer.

The protein resides in the cytoplasm. The enzyme catalyses (R)-pantoate + beta-alanine + ATP = (R)-pantothenate + AMP + diphosphate + H(+). It functions in the pathway cofactor biosynthesis; (R)-pantothenate biosynthesis; (R)-pantothenate from (R)-pantoate and beta-alanine: step 1/1. Its function is as follows. Catalyzes the condensation of pantoate with beta-alanine in an ATP-dependent reaction via a pantoyl-adenylate intermediate. This is Pantothenate synthetase from Cytophaga hutchinsonii (strain ATCC 33406 / DSM 1761 / CIP 103989 / NBRC 15051 / NCIMB 9469 / D465).